Here is a 150-residue protein sequence, read N- to C-terminus: 3-hydroxyacyl-[acyl-carrier-protein] dehydratase FabZ (150 aa).

Residue H54 is part of the active site.

Belongs to the thioester dehydratase family. FabZ subfamily.

The protein resides in the cytoplasm. It carries out the reaction a (3R)-hydroxyacyl-[ACP] = a (2E)-enoyl-[ACP] + H2O. Its function is as follows. Involved in unsaturated fatty acids biosynthesis. Catalyzes the dehydration of short chain beta-hydroxyacyl-ACPs and long chain saturated and unsaturated beta-hydroxyacyl-ACPs. In Pseudoalteromonas translucida (strain TAC 125), this protein is 3-hydroxyacyl-[acyl-carrier-protein] dehydratase FabZ.